The following is a 266-amino-acid chain: Glucosamine-6-phosphate deaminase (266 aa).

The Proton acceptor; for enolization step role is filled by Asp72. The active-site For ring-opening step is the Asp141. His143 (proton acceptor; for ring-opening step) is an active-site residue. Catalysis depends on Glu148, which acts as the For ring-opening step.

This sequence belongs to the glucosamine/galactosamine-6-phosphate isomerase family. NagB subfamily. In terms of assembly, homohexamer.

It carries out the reaction alpha-D-glucosamine 6-phosphate + H2O = beta-D-fructose 6-phosphate + NH4(+). It functions in the pathway amino-sugar metabolism; N-acetylneuraminate degradation; D-fructose 6-phosphate from N-acetylneuraminate: step 5/5. Its activity is regulated as follows. Allosterically activated by N-acetylglucosamine 6-phosphate (GlcNAc6P). In terms of biological role, catalyzes the reversible isomerization-deamination of glucosamine 6-phosphate (GlcN6P) to form fructose 6-phosphate (Fru6P) and ammonium ion. The chain is Glucosamine-6-phosphate deaminase from Yersinia enterocolitica serotype O:8 / biotype 1B (strain NCTC 13174 / 8081).